The primary structure comprises 473 residues: Digalactosyldiacylglycerol synthase 2, chloroplastic (473 aa).

2 interaction with the membrane lipid bilayer regions span residues 130–148 (LTWF…YVIG) and 227–245 (QPFT…SKGY).

It belongs to the glycosyltransferase group 1 family. Glycosyltransferase 4 subfamily. In terms of tissue distribution, expressed in leaves, flowers and roots, but not in stems and siliques.

The protein resides in the plastid. It localises to the chloroplast outer membrane. The enzyme catalyses a 1,2-diacyl-3-O-(beta-D-galactosyl)-sn-glycerol + UDP-alpha-D-galactose = a 1,2-diacyl-3-O-[alpha-D-galactosyl-(1-&gt;6)-beta-D-galactosyl]-sn-glycerol + UDP + H(+). With respect to regulation, stimulated by anionic phospholipids. Involved in the synthesis of diacylglycerol galactolipids that are specifically found in thylakoid membranes. Specific for alpha-glycosidic linkages. During phosphate shortage, involved in the biosynthesis of digalactosyldiacylglycerol (DGDG) which rescues the limitation of phospholipids. This is Digalactosyldiacylglycerol synthase 2, chloroplastic from Arabidopsis thaliana (Mouse-ear cress).